Consider the following 510-residue polypeptide: AAA-ATPase At3g28540 (510 aa).

A helical membrane pass occupies residues 7–25 (LFGFTGTTMASLMFFWSVY). ATP is bound at residue 246–253 (GPPGTGKS). The interval 460 to 510 (KEKAKKLAEEEKMKKAARDARRIKKKAEEEHKKKNKVEENGDVSHDNGNHI) is disordered.

Belongs to the AAA ATPase family. BCS1 subfamily. It depends on Mg(2+) as a cofactor.

Its subcellular location is the membrane. It carries out the reaction ATP + H2O = ADP + phosphate + H(+). The protein is AAA-ATPase At3g28540 of Arabidopsis thaliana (Mouse-ear cress).